Here is a 99-residue protein sequence, read N- to C-terminus: MTTLSTKQKQFLKGLAHHLNPVVMLGGNGLTEGVLAEIENALNHHELIKVKVAGADRETKQLIINAIVRETKAAQVQTIGHILVLYRPSEEAKIQLPRK.

The region spanning 2-98 (TTLSTKQKQF…SEEAKIQLPR (97 aa)) is the CRM domain.

In Haemophilus influenzae (strain ATCC 51907 / DSM 11121 / KW20 / Rd), this protein is RNA-binding protein HI_1333.